Consider the following 249-residue polypeptide: Probable septum site-determining protein MinC (249 aa).

The segment at 116–149 (AAVSPPPPPPPPPARAEPAAPVARPAPGRMQRNA) is disordered. Over residues 119-130 (SPPPPPPPPPAR) the composition is skewed to pro residues. Residues 131-142 (AEPAAPVARPAP) are compositionally biased toward low complexity.

It belongs to the MinC family. Interacts with MinD and FtsZ.

Its function is as follows. Cell division inhibitor that blocks the formation of polar Z ring septums. Rapidly oscillates between the poles of the cell to destabilize FtsZ filaments that have formed before they mature into polar Z rings. Prevents FtsZ polymerization. The polypeptide is Probable septum site-determining protein MinC (Xanthomonas campestris pv. campestris (strain B100)).